The sequence spans 1587 residues: Sister chromatid cohesion protein mis4 (1587 aa).

The segment at 140–172 (PKEKPDASSINTNRSSSDNGFLTPSSSPRSPSC) is disordered. The segment covering 147–162 (SSINTNRSSSDNGFLT) has biased composition (polar residues). Residues 163–172 (PSSSPRSPSC) are compositionally biased toward low complexity. The residue at position 183 (Ser183) is a Phosphoserine. 6 HEAT repeats span residues 775–812 (LNLKFFVSLIIGFLDSPQASLRTKCLRIINQMKTIPSI), 814–851 (RTHPEVLAQIISKSNDQSAIVRDTVLDLLGTYIMAYRE), 853–888 (IPQIYGCIISGISDPSTIVRKRAIKQLCEVYEATED), 890–927 (NIRVDIASKLLTRSNDEEETISELSLEVLEKLWFSPAS), 1101–1140 (ATLMEIVPCLCSLFTRLNDYERLKKIVVSCLKSLEEARHS), and 1183–1220 (DAYVILLGYFQKLLKDAKGQLRIHIIDNMSRICLRETS).

This sequence belongs to the SCC2/Nipped-B family. As to quaternary structure, interacts with ssl3.

It is found in the nucleus. Its subcellular location is the chromosome. Plays a structural role in chromatin. Chromatid cohesion molecule required for equal sister chromatid separation in anaphase. May form a stable link between chromatids in S phase that is split rather than removed in anaphase. Also required for spindle-kinetochore interaction in early mitosis and inhibit sister chromatid separation until the cleavage of Rad21 in anaphase. The polypeptide is Sister chromatid cohesion protein mis4 (mis4) (Schizosaccharomyces pombe (strain 972 / ATCC 24843) (Fission yeast)).